The following is a 492-amino-acid chain: MSLWINGEWTTGQGEALEKRDPVGSGLLWQGHAADDAQVQAACAAARAAFPAWAKRPFADRQAIAEKFAALLEANKTELTRIIALETSKPRWEAATEVTAMINKVGISLKAYQTRTGEQHSPMPDGAATLRHRPHGVLAVFGPYNFPGHLPNGHIVPALLAGNTLVFKPSELTPHTGEAVMKLWEQAGLPAGVLNLVQGARATGQALSARPELDGLLFTGSAGTGYQLHRQLAGQPEKILALEMGGNNPLIVEDPDDIDGAVHLAIQSAFITAGQRCTCARRLLVKRGAAGDAFLARLVEIAGRLRPDRWDAEPQPFMGGLISAQAAERVLEAWQGHLSRGGKPLLTPALVQAGSSLLTPGIIELTGVRDVPDEEVFGPLLGVWRYDDFDEAITLANATRYGLSCGLISPVREKFDQLLLEARAGIVNWNKPLTGAASTAPFGGVGASGNHRPSAWYAADYCAWPMASLESPTFALPQTLNPGLDFSGKEQA.

220–225 (GSAGTG) contributes to the NAD(+) binding site. Catalysis depends on residues glutamate 243 and cysteine 277.

It belongs to the aldehyde dehydrogenase family. AstD subfamily.

It carries out the reaction N-succinyl-L-glutamate 5-semialdehyde + NAD(+) + H2O = N-succinyl-L-glutamate + NADH + 2 H(+). The protein operates within amino-acid degradation; L-arginine degradation via AST pathway; L-glutamate and succinate from L-arginine: step 4/5. In terms of biological role, catalyzes the NAD-dependent reduction of succinylglutamate semialdehyde into succinylglutamate. The polypeptide is N-succinylglutamate 5-semialdehyde dehydrogenase (Cronobacter sakazakii (strain ATCC BAA-894) (Enterobacter sakazakii)).